The following is a 550-amino-acid chain: Chaperonin GroEL (550 aa).

Residues 30–33 (TLGP), Lys-51, 87–91 (DGTTT), Gly-415, 479–481 (NAA), and Asp-495 contribute to the ATP site.

It belongs to the chaperonin (HSP60) family. In terms of assembly, forms a cylinder of 14 subunits composed of two heptameric rings stacked back-to-back. Interacts with the co-chaperonin GroES.

The protein resides in the cytoplasm. The enzyme catalyses ATP + H2O + a folded polypeptide = ADP + phosphate + an unfolded polypeptide.. Its function is as follows. Together with its co-chaperonin GroES, plays an essential role in assisting protein folding. The GroEL-GroES system forms a nano-cage that allows encapsulation of the non-native substrate proteins and provides a physical environment optimized to promote and accelerate protein folding. The chain is Chaperonin GroEL from Burkholderia mallei (strain NCTC 10247).